A 169-amino-acid polypeptide reads, in one-letter code: Lutropin/choriogonadotropin subunit beta (169 aa).

The first 20 residues, 1-20, serve as a signal peptide directing secretion; it reads MEMLQGLLLWMLLSVGGVWA. 6 disulfides stabilise this stretch: cysteine 29-cysteine 77, cysteine 43-cysteine 92, cysteine 46-cysteine 130, cysteine 54-cysteine 108, cysteine 58-cysteine 110, and cysteine 113-cysteine 120. N-linked (GlcNAc...) asparagine glycosylation is present at asparagine 33. Positions 131-169 are disordered; sequence APQTSSSCKDPPSQPLTSTSTPTPGASRRSSHPLPINTS. Positions 145 to 158 are enriched in low complexity; the sequence is PLTSTSTPTPGASR.

This sequence belongs to the glycoprotein hormones subunit beta family. As to quaternary structure, heterodimer of a common alpha chain and a unique beta chain which confers biological specificity to thyrotropin, lutropin, follitropin and gonadotropin.

It is found in the secreted. Its function is as follows. Promotes spermatogenesis and ovulation by stimulating the testes and ovaries to synthesize steroids. This is Lutropin/choriogonadotropin subunit beta (LHB) from Equus asinus (Donkey).